Consider the following 476-residue polypeptide: ATP synthase subunit beta (476 aa).

ATP is bound at residue 154 to 161 (GGAGVGKT).

The protein belongs to the ATPase alpha/beta chains family. In terms of assembly, F-type ATPases have 2 components, CF(1) - the catalytic core - and CF(0) - the membrane proton channel. CF(1) has five subunits: alpha(3), beta(3), gamma(1), delta(1), epsilon(1). CF(0) has three main subunits: a(1), b(2) and c(9-12). The alpha and beta chains form an alternating ring which encloses part of the gamma chain. CF(1) is attached to CF(0) by a central stalk formed by the gamma and epsilon chains, while a peripheral stalk is formed by the delta and b chains.

It is found in the cell inner membrane. It carries out the reaction ATP + H2O + 4 H(+)(in) = ADP + phosphate + 5 H(+)(out). Its function is as follows. Produces ATP from ADP in the presence of a proton gradient across the membrane. The catalytic sites are hosted primarily by the beta subunits. The polypeptide is ATP synthase subunit beta (Nitrobacter winogradskyi (strain ATCC 25391 / DSM 10237 / CIP 104748 / NCIMB 11846 / Nb-255)).